Reading from the N-terminus, the 591-residue chain is UvrABC system protein C (591 aa).

In terms of domain architecture, GIY-YIG spans 14-91 (DSPGCYLHKD…IQKNMPKYNI (78 aa)). A UVR domain is found at 196–231 (DKIVTGLKEKMLAASQAMEFERAAEYRDLISGIATL).

It belongs to the UvrC family. As to quaternary structure, interacts with UvrB in an incision complex.

It localises to the cytoplasm. In terms of biological role, the UvrABC repair system catalyzes the recognition and processing of DNA lesions. UvrC both incises the 5' and 3' sides of the lesion. The N-terminal half is responsible for the 3' incision and the C-terminal half is responsible for the 5' incision. In Streptococcus uberis (strain ATCC BAA-854 / 0140J), this protein is UvrABC system protein C.